Here is a 490-residue protein sequence, read N- to C-terminus: Interferon-induced protein with tetratricopeptide repeats 3 (490 aa).

TPR repeat units follow at residues 51 to 84, 94 to 127, 136 to 169, 172 to 206, 207 to 240, and 241 to 274; these read ATMYNLLAYIKHLDGNNEAALECLRQAEELIQQE, LVTWGNYVWVYYHLGRLSDAQIYVDKVKQTCKKF, SELDCEEGWTQLKCGRNERAKVCFEKALEEKPNN, FSSGLAIAMYHLDNNPEKQFSTDVLKQAIELSPDN, QYVKVLLGLKLQKMNKEAEGEQFVEEALEKAPCQ, and TDVLRSAAKFYRRKGDLDKAIELFQRVLESTPNN. Ser-203 is modified (phosphoserine). The disordered stretch occupies residues 386 to 409; that stretch reads LSISKKSTDKEEIKDQPQNVSENL. Residues 391–400 are compositionally biased toward basic and acidic residues; sequence KSTDKEEIKD. TPR repeat units lie at residues 415–448 and 450–481; these read PNYWYLQGLIHKQNGDLLQAAKCYEKELGRLLRD and PSGIGSIFLSASELEDGSEEMGQGAVSSSPRE. A disordered region spans residues 467 to 490; the sequence is SEEMGQGAVSSSPRELLSNSEQLN. A compositionally biased stretch (polar residues) spans 474-490; the sequence is AVSSSPRELLSNSEQLN. Position 478 is a phosphoserine (Ser-478).

The protein belongs to the IFIT family. In terms of assembly, component of an interferon-dependent multiprotein complex, at least composed of IFIT1, IFIT2 and IFIT3. Interacts with IFIT1 and IFIT2. Interacts (via N-terminus) with MAVS, TBK1, TRAF6 and RIGI. Interacts with COPS5.

It is found in the cytoplasm. Its subcellular location is the mitochondrion. IFN-induced antiviral protein which acts as an inhibitor of cellular as well as viral processes, cell migration, proliferation, signaling, and viral replication. Enhances MAVS-mediated host antiviral responses by serving as an adapter bridging TBK1 to MAVS which leads to the activation of TBK1 and phosphorylation of IRF3 and phosphorylated IRF3 translocates into nucleus to promote antiviral gene transcription. Exhibits an antiproliferative activity via the up-regulation of cell cycle negative regulators CDKN1A/p21 and CDKN1B/p27. Normally, CDKN1B/p27 turnover is regulated by COPS5, which binds CDKN1B/p27 in the nucleus and exports it to the cytoplasm for ubiquitin-dependent degradation. IFIT3 sequesters COPS5 in the cytoplasm, thereby increasing nuclear CDKN1B/p27 protein levels. Up-regulates CDKN1A/p21 by down-regulating MYC, a repressor of CDKN1A/p21. Can negatively regulate the apoptotic effects of IFIT2. In Pan troglodytes (Chimpanzee), this protein is Interferon-induced protein with tetratricopeptide repeats 3 (IFIT3).